The primary structure comprises 450 residues: 23S rRNA (uracil(1939)-C(5))-methyltransferase RlmD (450 aa).

Positions 12 to 70 (SKQLSAKLSLSVNQLDHLGAGIAQHQGKVVFIPGALPDETVTVQLTEQKKNYARAKLIK) constitute a TRAM domain. [4Fe-4S] cluster is bound by residues C83, C89, C92, and C171. 6 residues coordinate S-adenosyl-L-methionine: Q283, F312, N317, E333, D360, and D380. The Nucleophile role is filled by C406.

This sequence belongs to the class I-like SAM-binding methyltransferase superfamily. RNA M5U methyltransferase family. RlmD subfamily.

It carries out the reaction uridine(1939) in 23S rRNA + S-adenosyl-L-methionine = 5-methyluridine(1939) in 23S rRNA + S-adenosyl-L-homocysteine + H(+). In terms of biological role, catalyzes the formation of 5-methyl-uridine at position 1939 (m5U1939) in 23S rRNA. In Shewanella baltica (strain OS223), this protein is 23S rRNA (uracil(1939)-C(5))-methyltransferase RlmD.